The primary structure comprises 350 residues: Salicylate decarboxylase (350 aa).

This sequence belongs to the metallo-dependent hydrolases superfamily. In terms of assembly, homotetramer.

The catalysed reaction is salicylate + H(+) = phenol + CO2. Its activity is regulated as follows. Inhibited by AgNO(3), HgCl(2), p-chloromercuribenzoic acid and NiCl(2). Its function is as follows. Reversibly catalyzes the regioselective carboxylation of phenol to form salicylic acid. Involved in a pathway for the degradation of salicylate via phenol. Also catalyzes the decarboxylation of beta-resorcylic acid (2,4-dihydroxybenzoic acid) into resorcinol (1,3-dihydroxybenzene), gamma-resorcylic acid (2,6-dihydroxybenzoic acid) into resorcinol, 2,3-dihydroxybenzoic acid into catechol (1,2-dihydroxybenzene), and 4-aminosalicylic acid into 3-aminophenol. The chain is Salicylate decarboxylase from Cutaneotrichosporon moniliiforme (Yeast).